A 116-amino-acid chain; its full sequence is Large ribosomal subunit protein bL19 (116 aa).

Belongs to the bacterial ribosomal protein bL19 family.

In terms of biological role, this protein is located at the 30S-50S ribosomal subunit interface and may play a role in the structure and function of the aminoacyl-tRNA binding site. This is Large ribosomal subunit protein bL19 from Ectopseudomonas mendocina (strain ymp) (Pseudomonas mendocina).